A 550-amino-acid chain; its full sequence is Leucine-rich repeat, immunoglobulin-like domain and transmembrane domain-containing protein 2 (550 aa).

A signal peptide spans 1–19; the sequence is MASVFHYFLLVLVFLDTHA. An LRRNT domain is found at 23–54; sequence FCLPGCTCSEESFGRTLQCTSVSLGKIPGNLS. Asparagine 52 carries N-linked (GlcNAc...) asparagine glycosylation. 4 LRR repeats span residues 80 to 103, 104 to 125, 128 to 149, and 152 to 173; these read TLEY…EHLP, ELRE…AFRA, LLRV…ALQF, and SLTY…VFLN. The LRRCT domain maps to 200-252; that stretch reads NPWVCDCRLRGLVQFVKSITLPVILVNSYLICQGPLSKAGQLFHETELSACMK. The region spanning 253–341 is the Ig-like domain; that stretch reads PQISTPSANI…SIGKSNLVIS (89 aa). The cysteines at positions 274 and 327 are disulfide-linked. Residues 361–451 enclose the Fibronectin type-III domain; the sequence is EGNAYIDLRV…QGQCVAFVTG (91 aa). A helical membrane pass occupies residues 466–486; it reads VTVVLCVVLLAVPVGAYAWAA. A disordered region spans residues 508-550; the sequence is SCTPAAPQSKDGSFREHPAVCDDGEGHIDTEGDKEKGGTEDNS. The span at 519 to 550 shows a compositional bias: basic and acidic residues; that stretch reads GSFREHPAVCDDGEGHIDTEGDKEKGGTEDNS.

As to quaternary structure, interacts with LRIT1; may form a heterodimer with LRIT1.

It is found in the membrane. This chain is Leucine-rich repeat, immunoglobulin-like domain and transmembrane domain-containing protein 2 (LRIT2), found in Homo sapiens (Human).